The primary structure comprises 409 residues: Phosphopentomutase (409 aa).

Mn(2+) contacts are provided by Asp10, Asp308, His313, Asp349, His350, and His361.

The protein belongs to the phosphopentomutase family. The cofactor is Mn(2+).

It is found in the cytoplasm. It carries out the reaction 2-deoxy-alpha-D-ribose 1-phosphate = 2-deoxy-D-ribose 5-phosphate. The enzyme catalyses alpha-D-ribose 1-phosphate = D-ribose 5-phosphate. Its pathway is carbohydrate degradation; 2-deoxy-D-ribose 1-phosphate degradation; D-glyceraldehyde 3-phosphate and acetaldehyde from 2-deoxy-alpha-D-ribose 1-phosphate: step 1/2. Functionally, isomerase that catalyzes the conversion of deoxy-ribose 1-phosphate (dRib-1-P) and ribose 1-phosphate (Rib-1-P) to deoxy-ribose 5-phosphate (dRib-5-P) and ribose 5-phosphate (Rib-5-P), respectively. The polypeptide is Phosphopentomutase (Buchnera aphidicola subsp. Schizaphis graminum (strain Sg)).